The primary structure comprises 564 residues: Lamassu protein LmuB (564 aa).

Component of antiviral defense system Lamassu type II, composed of LmuA and LmuB. Expression of Lamassu type II in B.subtilis (strain BEST7003) confers resistance to phage SpBeta. May be an ATPase. In Bacillus cereus (strain VD014), this protein is Lamassu protein LmuB.